A 308-amino-acid chain; its full sequence is Glucan 1,3-beta-glucosidase BGL2 (308 aa).

The N-terminal stretch at 1 to 18 is a signal peptide; that stretch reads MQIKFLTTLATVLTSVAA. The Proton donor role is filled by glutamate 119. A glycan (N-linked (GlcNAc...) asparagine) is linked at asparagine 197. Residue glutamate 228 is the Nucleophile of the active site.

This sequence belongs to the glycosyl hydrolase 17 family.

Its subcellular location is the secreted. It is found in the cell wall. It localises to the cytoplasm. The catalysed reaction is Successive hydrolysis of beta-D-glucose units from the non-reducing ends of (1-&gt;3)-beta-D-glucans, releasing alpha-glucose.. Its function is as follows. Cell wall glucan 1,3-beta-glucosidase involved in cell wall biosynthesis and virulence. Crucial for delivery of beta-1,3-glucan to the biofilm matrix and for accumulation of mature matrix biomass. Plays a role as a major antigen in human systemic candidiasis patients. In Candida albicans (strain SC5314 / ATCC MYA-2876) (Yeast), this protein is Glucan 1,3-beta-glucosidase BGL2 (BGL2).